Consider the following 204-residue polypeptide: Pyridoxal 5'-phosphate synthase subunit PdxT (204 aa).

52–54 is a binding site for L-glutamine; sequence GES. Residue Cys-84 is the Nucleophile of the active site. L-glutamine is bound by residues Arg-116 and 143 to 144; that span reads IR. Catalysis depends on charge relay system residues His-184 and Glu-186.

This sequence belongs to the glutaminase PdxT/SNO family. In terms of assembly, in the presence of PdxS, forms a dodecamer of heterodimers. Only shows activity in the heterodimer.

The enzyme catalyses aldehydo-D-ribose 5-phosphate + D-glyceraldehyde 3-phosphate + L-glutamine = pyridoxal 5'-phosphate + L-glutamate + phosphate + 3 H2O + H(+). It catalyses the reaction L-glutamine + H2O = L-glutamate + NH4(+). It functions in the pathway cofactor biosynthesis; pyridoxal 5'-phosphate biosynthesis. Catalyzes the hydrolysis of glutamine to glutamate and ammonia as part of the biosynthesis of pyridoxal 5'-phosphate. The resulting ammonia molecule is channeled to the active site of PdxS. This is Pyridoxal 5'-phosphate synthase subunit PdxT from Pyrobaculum arsenaticum (strain DSM 13514 / JCM 11321 / PZ6).